The primary structure comprises 310 residues: Peroxidase 44 (310 aa).

Positions 1-20 (MRSITALFFLFCFLAPSALA) are cleaved as a signal peptide. 4 disulfide bridges follow: C31-C110, C64-C69, C116-C305, and C194-C218. Residue H62 is the Proton acceptor of the active site. Residues D63, V66, G68, D70, and S72 each contribute to the Ca(2+) site. Residue P156 participates in substrate binding. H187 serves as a coordination point for heme b. S188 contacts Ca(2+). Residues D229, T232, and D237 each contribute to the Ca(2+) site.

It belongs to the peroxidase family. Classical plant (class III) peroxidase subfamily. It depends on heme b as a cofactor. Ca(2+) is required as a cofactor.

The protein localises to the secreted. The enzyme catalyses 2 a phenolic donor + H2O2 = 2 a phenolic radical donor + 2 H2O. Its function is as follows. Removal of H(2)O(2), oxidation of toxic reductants, biosynthesis and degradation of lignin, suberization, auxin catabolism, response to environmental stresses such as wounding, pathogen attack and oxidative stress. These functions might be dependent on each isozyme/isoform in each plant tissue. This is Peroxidase 44 (PER44) from Arabidopsis thaliana (Mouse-ear cress).